The primary structure comprises 43 residues: Protein PsbN (43 aa).

A helical membrane pass occupies residues 5–27; the sequence is TLIAIFISCSLVSFTGYALYTAF.

It belongs to the PsbN family.

The protein localises to the plastid. Its subcellular location is the chloroplast thylakoid membrane. May play a role in photosystem I and II biogenesis. The chain is Protein PsbN from Lopidium concinnum (Moss).